The primary structure comprises 310 residues: Prostate androgen-regulated mucin-like protein 1 homolog (310 aa).

Residues 1–20 (MVYKTLFALCILTAGWRVQS) form the signal peptide. Topologically, residues 21-258 (LPTSAPLSVS…EVEHALSSGS (238 aa)) are extracellular. Residues 40–74 (TIWTSSPQNTDADTASPSNGTHNNSVLPVTASAPT) show a composition bias toward polar residues. Residues 40–224 (TIWTSSPQNT…VPQEKTPPTT (185 aa)) form a disordered region. Residues asparagine 58, asparagine 62, and asparagine 80 are each glycosylated (N-linked (GlcNAc...) asparagine). Polar residues predominate over residues 92-103 (SPGSNWEGTNTD). Residues 150–209 (SPQAPASSPSSLSTSPPEVFSVSVTTNHSSTVTSTQPTGAPTAPESPTEESSSDHTPTSH) are compositionally biased toward low complexity. Asparagine 176 carries N-linked (GlcNAc...) asparagine glycosylation. A helical transmembrane segment spans residues 259 to 279 (IAAITVTVIAVVLLVFGVAAY). Topologically, residues 280–310 (LKIRHSSYGRLLDDHDYGSWGNYNNPLYDDS) are cytoplasmic. A Phosphoserine modification is found at serine 298.

Belongs to the PARM family. Post-translationally, highly N-glycosylated and O-glycosylated.

It localises to the cell membrane. Its subcellular location is the golgi apparatus membrane. The protein resides in the endosome membrane. In terms of biological role, may regulate TLP1 expression and telomerase activity, thus enabling certain prostatic cells to resist apoptosis. The sequence is that of Prostate androgen-regulated mucin-like protein 1 homolog (PARM1) from Pongo abelii (Sumatran orangutan).